Here is a 485-residue protein sequence, read N- to C-terminus: Keratin, type I cytoskeletal 14 (485 aa).

The segment covering 1-15 (MATCSRQFTSSSSMK) has biased composition (polar residues). The tract at residues 1–21 (MATCSRQFTSSSSMKGSCGIG) is disordered. The interval 1 to 121 (MATCSRQFTS…GLGDGLLVGS (121 aa)) is head. Residues 122 to 157 (EKVTMQNLNDRLATYLDKVRALEEANSDLEVKIRDW) form a coil 1A region. Residues 122 to 433 (EKVTMQNLND…RLLEGEDAHL (312 aa)) enclose the IF rod domain. The tract at residues 158-175 (YQRQRPTEIKDYSPYFKT) is linker 1. Residues 176–267 (IEDLKSKILA…KNHEEEMASM (92 aa)) are coil 1B. The interval 268–290 (RGQVGGDVNVEMDAAPGVDLSRI) is linker 12. Positions 291–429 (LNEMRDQYEK…ATYRRLLEGE (139 aa)) are coil 2. The segment at 430 to 485 (DAHLSSAQFSSSSQFSSGSQSSRDVTSTNRQIRTKVMDVHDGKVVSTHEQVLRTKN) is tail. The segment at 432-485 (HLSSAQFSSSSQFSSGSQSSRDVTSTNRQIRTKVMDVHDGKVVSTHEQVLRTKN) is interaction with Type I keratins and keratin filaments. Residues 437–451 (QFSSSSQFSSGSQSS) show a composition bias toward low complexity. The tract at residues 437–458 (QFSSSSQFSSGSQSSRDVTSTN) is disordered. Ser-448 is modified (phosphoserine).

It belongs to the intermediate filament family. As to quaternary structure, heterotetramer of two type I and two type II keratins. Forms a disulfide-linked heterodimer (via 2B domains) with KRT5 (via 2B domains). Forms a heterodimer with KRT1; the interaction is more abundant in the absence of KRT5. Interacts with TRADD and with keratin filaments. Associates with other type I keratins. Interacts with EPPK1. Interacts with KLHL24. Interacts with PKP1 (via N-terminus) and PKP2. A disulfide bond is formed between rather than within filaments and promotes the formation of a keratin filament cage around the nucleus. In terms of processing, ubiquitinated by the BCR(KLHL24) E3 ubiquitin ligase complex. In terms of tissue distribution, expressed in most cells of squamous cell carcinomas, in spinous and suprabasal cells around the branching papillary region of papillomas, and weakly in a few proliferative cells of hyperplastic tissue.

It localises to the cytoplasm. The protein resides in the nucleus. In terms of biological role, the nonhelical tail domain is involved in promoting KRT5-KRT14 filaments to self-organize into large bundles and enhances the mechanical properties involved in resilience of keratin intermediate filaments in vitro. This Rattus norvegicus (Rat) protein is Keratin, type I cytoskeletal 14 (Krt14).